The following is a 294-amino-acid chain: Nucleotide-binding protein Dtur_1129 (294 aa).

Position 10 to 17 (10 to 17 (GLSGAGKS)) interacts with ATP. 61–64 (DIRT) contributes to the GTP binding site.

Belongs to the RapZ-like family.

Its function is as follows. Displays ATPase and GTPase activities. This is Nucleotide-binding protein Dtur_1129 from Dictyoglomus turgidum (strain DSM 6724 / Z-1310).